Reading from the N-terminus, the 618-residue chain is MKSLRLPATVLFCLLLLIKGLGAAPPGHPEAQPPPPSSEHKEPVAGDAVLGSKDVSALEVRAARNSEPQDEGELFQGVDPRALAAVLLQALDRPASPPAPGGSQQRPEEETAESLLTETVRSQTHSLPVPETQAPAAPPRPQTQENGAEAPDPSEELEALASLLQELRDFSPSSAKRQQETAAAETETRTHTLTRVNLESPGPERVWRASWGEFQARVPERAPLPPPAPPQFQARVPESGPLPEAHQFGGGSSPKTHLGEALAPLSKAYQGLAAPFPKARRPETSLLGGTEAGERLLQQGLAQVEAGRRQAEATRQAAAQEERLADLASDLLLQYLLQGGARQRGLGGRGLQEEEGGGRETARQQEEAEQERRGGEERVGEEDEEAAEAEAEAEEAERARQNALLFAEEEEGEAGAEDKRSREETPGHRRKEAEGAEEGGAEDEDDDEEMDPQTIDSLIELSTKLHLPADDVVSIIEEVEEKRKRKKNAPPEPVPPPRAAPAPTHARSPKTPPPAPAPDREELPDGNEELPPRDRXENEVFSPVPYHPFPNYIRARTVQPPPASRRRHYHHALPPSRHYPDREAQARRAQEEAEAEERRLQEQEELENYIEHVLLRRP.

Positions methionine 1–alanine 23 are cleaved as a signal peptide. 3 disordered regions span residues alanine 23–glycine 46, valine 86–proline 201, and proline 219–leucine 262. The segment covering proline 26 to serine 37 has biased composition (pro residues). Low complexity predominate over residues glutamate 180 to arginine 195. Positions leucine 301–leucine 332 form a coiled coil. Pyrrolidone carboxylic acid is present on glutamine 310. The disordered stretch occupies residues arginine 342–glutamine 603. The segment covering glycine 356–arginine 378 has biased composition (basic and acidic residues). The segment covering valine 379–glutamate 395 has biased composition (acidic residues). Residues alanine 416–glutamate 434 are compositionally biased toward basic and acidic residues. Serine 421 is subject to Phosphoserine. Position 425 is a phosphothreonine (threonine 425). Over residues glycine 435–aspartate 451 the composition is skewed to acidic residues. The segment covering proline 490–alanine 500 has biased composition (pro residues). Residues histidine 578–glutamate 602 are compositionally biased toward basic and acidic residues.

Multiple peptides are derived from VGF, with activities in synaptic plasticity, antidepression, penile erection, autonomic activation, and increases in energy expenditure.

It localises to the secreted. Its subcellular location is the cytoplasmic vesicle. The protein resides in the secretory vesicle. Secreted polyprotein that is packaged and proteolytically processed by prohormone convertases PCSK1 and PCSK2 in a cell-type-specific manner. VGF and peptides derived from its processing play many roles in neurogenesis and neuroplasticity associated with learning, memory, depression and chronic pain. Functionally, plays a role in the control of body fluid homeostasis by regulating vasopressin release. Suppresses presynaptic glutamatergic neurons connected to vasopressin neurons. In terms of biological role, plays a role in the control of body fluid homeostasis by regulating vasopressin release. Activates GABAergic interneurons which are inhibitory neurons of the nervous system and thereby suppresses presynaptic glutamatergic neurons. Also stimulates feeding behavior in an orexin-dependent manner in the hypothalamus. Functions as a positive regulator for the activation of orexin neurons resulting in elevated gastric acid secretion and gastric emptying. In Bos taurus (Bovine), this protein is Neurosecretory protein VGF.